Consider the following 99-residue polypeptide: uncharacterized protein (99 aa).

The first 17 residues, 1 to 17, serve as a signal peptide directing secretion; sequence MMMNSFFPAMALMVLVG. The N-palmitoyl cysteine moiety is linked to residue cysteine 18. A lipid anchor (S-diacylglycerol cysteine) is attached at cysteine 18.

It is found in the cell membrane. This is an uncharacterized protein from Escherichia coli O157:H7.